The chain runs to 248 residues: Probable transcriptional regulatory protein Noc_0137 (248 aa).

This sequence belongs to the TACO1 family.

It localises to the cytoplasm. This is Probable transcriptional regulatory protein Noc_0137 from Nitrosococcus oceani (strain ATCC 19707 / BCRC 17464 / JCM 30415 / NCIMB 11848 / C-107).